We begin with the raw amino-acid sequence, 379 residues long: Zinc finger protein 883 (379 aa).

13 C2H2-type zinc fingers span residues 13–35 (YLCTECGKGYTCLASLTQHQKTH), 41–63 (YECKICGKSFTRNSNLVQHQRIH), 69–91 (YECNECGKAFSQSTNLIQHQRVH), 97–119 (YECNECEKTFSHRSSLRNHERIH), 125–147 (YPCNECGKAFSHISALTQHHRIH), 153–175 (YECTECGKTFSRSTHLIEHQGIH), 181–203 (YQCKQCRKVFCHSTSLIRHQRTH), 209–231 (YECNECGKAFSHTPAFIQHQRIH), 237–259 (YECNACGKAFNRSAHLTEHQRTH), 265–287 (YVCKECGKTFSRSTHLTEHLKIH), 293–315 (YQCNECQKLFCYRTSLIRHQRTH), 321–343 (YQCNECGKSFSLSSALTKHKRIH), and 349–371 (YQCTKCGDVFCHSTSLIRHQKTH).

The protein belongs to the krueppel C2H2-type zinc-finger protein family.

The protein localises to the nucleus. Its function is as follows. May be involved in transcriptional regulation. In Homo sapiens (Human), this protein is Zinc finger protein 883 (ZNF883).